The sequence spans 1050 residues: MSKFFIDRPIFAWVIALVIMLVGALSILKLPINQYPSIAPPAIAIAVTYPGASAQTVQDTVVQVIEQQLNGIDNLRYVSSESNSDGSMTITATFEQGTNPDTAQVQVQNKLNLATPLLPQEVQQQGIRVTKAVKNFLLVIGLVSEDGSMTKDDLANYIVSNMQDPISRTAGVGDFQVFGAQYAMRIWLDPAKLNKFQLTPVDVKTAVAAQNVQVSSGQLGGLPALPGTQLNATIIGKTRLQTAEQFESILLKVNKDGSQVRLGDVAQVGLGGENYAVSAQFNGKPASGLAVKLATGANALDTAKALRETIKGLEPFFPPGVKAVFPYDTTPVVTESISGVIHTLIEAVVLVFLVMYLFLQNFRATIITTMTVPVVLLGTFGILAAAGFSINTLTMFAMVLAIGLLVDDAIVVVENVERVMSEEGLPPKEATKRSMEQIQGALVGIALVLSAVLLPMAFFGGSTGVIYRQFSITIVSAMGLSVLVALIFTPALCATMLKPLKKGEHHTAKGGFFGWFNRNFDRSVNGYERSVGTILRNKVPFLLAYALIVVGMIWLFARIPTAFLPEEDQGVLFAQVQTPAGSSAERTQVVVDQMREYLLKDEADTVSSVFTVNGFNFAGRGQSSGMAFIMLKPWDERSKENSVFALAQRAQQHFFTFRDAMVFAFAPPAVLELGNATGFDVFLQDRGGVGHAKLMEARNQFLAKAAQSKILSAVRPNGLNDEPQYQLTIDDERASALGVTIADINNTLSIALGASYVNDFIDRGRVKKVYIQGEPSARMSPEDLQKWYVRNGAGEMVPFSSFAKGEWTYGSPKLSRYNGVEAMEILGAPAPGYSTGEAMAEVERIAGELPSGIGFSWTGMSYEEKLSGSQMPALFALSVLFVFLCLAALYESWSIPIAVVLVVPLGIIGALIATSLRGLSNDVYFLVGLLTTIGLAAKNAILIVEFAKELHEQGRSLYDAAIEACRMRLRPIIMTSLAFILGVVPLTIASGAGAGSQHAIGTGVIGGMISATVLAIFWVPLFFVAVSSLFGSKEPEKDVTPENPRYEAGQ.

The next 12 helical transmembrane spans lie at 10-30 (IFAW…ILKL), 339-359 (GVIH…YLFL), 370-390 (MTVP…GFSI), 393-413 (LTMF…IVVV), 440-460 (GALV…AFFG), 472-492 (ITIV…TPAL), 539-559 (VPFL…FARI), 871-891 (MPAL…ALYE), 893-913 (WSIP…ALIA), 923-943 (VYFL…AILI), 972-992 (IIMT…ASGA), and 1004-1024 (VIGG…LFFV).

The protein belongs to the resistance-nodulation-cell division (RND) (TC 2.A.6) family.

Its subcellular location is the cell inner membrane. In terms of biological role, the inner membrane transporter component of a constitutive organic solvent efflux system. Involved in export of toluene, styrene, m-xylene, propylbenzene and ethylbenzene. Also exports AMP and the antibiotics carbenicillin, nalidixic acid, chloramphenicol and tetracycline. This is Toluene efflux pump membrane transporter TtgB (ttgB) from Pseudomonas putida (strain DOT-T1E).